A 536-amino-acid polypeptide reads, in one-letter code: MSKFVFVTGGVVSSIGKGIVAASLGRLLKSRGYSVSILKLDPYLNVDPGTMSPFQHGEVFVTEDGAETDLDLGHYERFTDTAMTRLNSVTTGSIYQAVINKERRGSYNGGTVQVIPHITREIRERIHRVASNSNADIIITEIGGTVGDIESLPFLEAIREFKNDVNRNDVAYIHVTLLPYIKTSGEIKTKPTQHSVKELRSIGIQPDLLVCRSDKSINEGLKKKLSGFCGVNINSVIEALDADSIYSVPLSLKKEGLCKETLKYLELEDKECDLKNWEKLVHNLRNPGTPIKVALVGKYIELGDAYLSVVEALRHACIEQKALLDLHWVSAEMIEKDSAETYLNEVDAIVVPGGFGNRGVNGKISAIKFARENKIPFLGLCLGMQCAVIEWARNVANLPDASSSELDPKTPNPVIHLLPEQEDVVDLGGTMRLGVYPCRLTNNTIGKKLYDEDVIYERHRHRYEFNNYYKQSFLNSGYKISGTSPDGRLVELIELDNHPYFLACQYHPEFLSRPGKPHPLFKGLIKSSQENLTQSN.

The amidoligase domain stretch occupies residues 1 to 267 (MSKFVFVTGG…CKETLKYLEL (267 aa)). Serine 13 serves as a coordination point for CTP. Serine 13 is a UTP binding site. ATP-binding positions include 14–19 (SIGKGI) and aspartate 71. Aspartate 71 and glutamate 141 together coordinate Mg(2+). CTP-binding positions include 148–150 (DIE), 188–193 (KTKPTQ), and lysine 224. Residues 188 to 193 (KTKPTQ) and lysine 224 contribute to the UTP site. Residues 292 to 534 (KVALVGKYIE…IKSSQENLTQ (243 aa)) enclose the Glutamine amidotransferase type-1 domain. Position 354 (glycine 354) interacts with L-glutamine. Catalysis depends on cysteine 381, which acts as the Nucleophile; for glutamine hydrolysis. L-glutamine contacts are provided by residues 382–385 (LGMQ), glutamate 405, and arginine 462. Residues histidine 507 and glutamate 509 contribute to the active site.

The protein belongs to the CTP synthase family. In terms of assembly, homotetramer.

The enzyme catalyses UTP + L-glutamine + ATP + H2O = CTP + L-glutamate + ADP + phosphate + 2 H(+). The catalysed reaction is L-glutamine + H2O = L-glutamate + NH4(+). It carries out the reaction UTP + NH4(+) + ATP = CTP + ADP + phosphate + 2 H(+). It functions in the pathway pyrimidine metabolism; CTP biosynthesis via de novo pathway; CTP from UDP: step 2/2. Allosterically activated by GTP, when glutamine is the substrate; GTP has no effect on the reaction when ammonia is the substrate. The allosteric effector GTP functions by stabilizing the protein conformation that binds the tetrahedral intermediate(s) formed during glutamine hydrolysis. Inhibited by the product CTP, via allosteric rather than competitive inhibition. Its function is as follows. Catalyzes the ATP-dependent amination of UTP to CTP with either L-glutamine or ammonia as the source of nitrogen. Regulates intracellular CTP levels through interactions with the four ribonucleotide triphosphates. The sequence is that of CTP synthase from Prochlorococcus marinus (strain MIT 9312).